Consider the following 418-residue polypeptide: UDP-N-acetylglucosamine 1-carboxyvinyltransferase (418 aa).

22–23 contacts phosphoenolpyruvate; the sequence is KN. Arg93 contacts UDP-N-acetyl-alpha-D-glucosamine. Cys117 (proton donor) is an active-site residue. Cys117 carries the 2-(S-cysteinyl)pyruvic acid O-phosphothioketal modification. Residues 122–126, Asp306, and Leu328 contribute to the UDP-N-acetyl-alpha-D-glucosamine site; that span reads RPIDL.

Belongs to the EPSP synthase family. MurA subfamily.

It localises to the cytoplasm. The enzyme catalyses phosphoenolpyruvate + UDP-N-acetyl-alpha-D-glucosamine = UDP-N-acetyl-3-O-(1-carboxyvinyl)-alpha-D-glucosamine + phosphate. The protein operates within cell wall biogenesis; peptidoglycan biosynthesis. In terms of biological role, cell wall formation. Adds enolpyruvyl to UDP-N-acetylglucosamine. The sequence is that of UDP-N-acetylglucosamine 1-carboxyvinyltransferase from Campylobacter hominis (strain ATCC BAA-381 / DSM 21671 / CCUG 45161 / LMG 19568 / NCTC 13146 / CH001A).